The chain runs to 434 residues: Putative B3 domain-containing protein Os04g0347400 (434 aa).

3 consecutive DNA-binding regions (TF-B3) follow at residues 27-124 (SFHK…FDTT), 150-246 (KPQF…FGIN), and 326-432 (WIKK…DRVE).

The protein localises to the nucleus. This Oryza sativa subsp. japonica (Rice) protein is Putative B3 domain-containing protein Os04g0347400.